The primary structure comprises 749 residues: Metabotropic glutamate receptor-like protein M (749 aa).

The N-terminal stretch at 1–22 (MIKLILSLIFLIICCNINPSES) is a signal peptide. Residues 23-385 (FKLITLTTGP…KIEFSSSVQK (363 aa)) are Extracellular-facing. N-linked (GlcNAc...) asparagine glycans are attached at residues N67, N164, N257, N271, and N345. Residues 386–406 (GFSIVSGCLIAFVILMMVGIV) form a helical membrane-spanning segment. At 407–419 (YYKDTPSIRSASP) the chain is on the cytoplasmic side. The chain crosses the membrane as a helical span at residues 420–440 (IFLNFSLIGGIIIYIGIIIWV). The Extracellular portion of the chain corresponds to 441–456 (GPISTHQCNARFWLVT). The helical transmembrane segment at 457-477 (LGFSTLIGSLVVKNFRIWLIF) threads the bilayer. Residues 478–492 (DNPELKAIKITNYQL) are Cytoplasmic-facing. Residues 493 to 513 (FPWVGLCLVINIVLMAILTSV) form a helical membrane-spanning segment. At 514–544 (GDLKAIEAQGIDSLGKYEYMTVCKMNSAGAS) the chain is on the extracellular side. A helical transmembrane segment spans residues 545-565 (TLYSILAYFAALLLVGVFVSW). The Cytoplasmic portion of the chain corresponds to 566-579 (KIRIVDIEEFNESK). A helical membrane pass occupies residues 580-600 (AIANTLYAVSFCLFVIVPLMI). Topologically, residues 601-609 (SPQEKQSET) are extracellular. The helical transmembrane segment at 610–630 (IILCVAGLFITTAALLIVFIP) threads the bilayer. The Cytoplasmic portion of the chain corresponds to 631-749 (KFWRVFIYGK…EEPVKTESQE (119 aa)). Residues 658 to 749 (ARAESLSKNS…EEPVKTESQE (92 aa)) are disordered. Positions 698–716 (SSLSEPNKPTKNNDGNVNV) are enriched in polar residues. Over residues 725 to 740 (FTDDTISEFDENEVNE) the composition is skewed to acidic residues.

In the N-terminal section; belongs to the BMP lipoprotein family. The protein in the C-terminal section; belongs to the G-protein coupled receptor 3 family. GABA-B receptor subfamily.

It localises to the membrane. The polypeptide is Metabotropic glutamate receptor-like protein M (grlM) (Dictyostelium discoideum (Social amoeba)).